The primary structure comprises 375 residues: Putative prophage phiRv2 integrase (375 aa).

Residues 75–153 (APFGEYAEGW…LLRAIMQTAL (79 aa)) form the Core-binding (CB) domain. The region spanning 175–364 (HKIRPATLDE…AKGRDREIAA (190 aa)) is the Tyr recombinase domain. Active-site residues include Arg209, His316, Arg319, and His342. Tyr351 (O-(3'-phospho-DNA)-tyrosine intermediate) is an active-site residue.

Belongs to the 'phage' integrase family.

Functionally, integrase is necessary for integration of the phage into the host genome by site-specific recombination. In conjunction with excisionase, integrase is also necessary for excision of the prophage from the host genome. This is Putative prophage phiRv2 integrase from Mycobacterium tuberculosis (strain CDC 1551 / Oshkosh).